The following is a 1105-amino-acid chain: uncharacterized protein (1105 aa).

This sequence belongs to the mycobacterial PPE family.

This is an uncharacterized protein from Mycobacterium tuberculosis (strain CDC 1551 / Oshkosh).